Reading from the N-terminus, the 93-residue chain is Neutrophil cationic peptide 2 (93 aa).

Positions 1-19 (MRTVPLFAACLLLTLMAQA) are cleaved as a signal peptide. A propeptide spanning residues 20 to 62 (EPLPRAADHSDTKMKGDREDHVAVISFWEEESTSLQDAGAGAG) is cleaved from the precursor. 3 disulfides stabilise this stretch: Cys65–Cys93, Cys67–Cys82, and Cys72–Cys92.

The protein belongs to the alpha-defensin family.

Its subcellular location is the secreted. Functionally, has antibiotic, anti-fungi and antiviral activity. The chain is Neutrophil cationic peptide 2 from Cavia porcellus (Guinea pig).